The primary structure comprises 173 residues: Thaumatin-like protein PWIR2 (173 aa).

The N-terminal stretch at 1–20 (MATSPVLFLLLAVFAAGASA) is a signal peptide.

This sequence belongs to the thaumatin family.

This is Thaumatin-like protein PWIR2 from Triticum aestivum (Wheat).